Here is a 170-residue protein sequence, read N- to C-terminus: Interferon gamma (170 aa).

The first 20 residues, 1–20 (MNSRLCIMALLLCFSQALLG), serve as a signal peptide directing secretion. N-linked (GlcNAc...) asparagine glycosylation is found at N36 and N103.

Belongs to the type II (or gamma) interferon family. In terms of assembly, homodimer. Interacts with IFNGR1 (via extracellular domain); this interaction promotes IFNGR1 dimerization. As to expression, released primarily from activated T lymphocytes.

The protein localises to the secreted. In terms of biological role, type II interferon produced by immune cells such as T-cells and NK cells that plays crucial roles in antimicrobial, antiviral, and antitumor responses by activating effector immune cells and enhancing antigen presentation. Primarily signals through the JAK-STAT pathway after interaction with its receptor IFNGR1 to affect gene regulation. Upon IFNG binding, IFNGR1 intracellular domain opens out to allow association of downstream signaling components JAK2, JAK1 and STAT1, leading to STAT1 activation, nuclear translocation and transcription of IFNG-regulated genes. Many of the induced genes are transcription factors such as IRF1 that are able to further drive regulation of a next wave of transcription. Plays a role in class I antigen presentation pathway by inducing a replacement of catalytic proteasome subunits with immunoproteasome subunits. In turn, increases the quantity, quality, and repertoire of peptides for class I MHC loading. Increases the efficiency of peptide generation also by inducing the expression of activator PA28 that associates with the proteasome and alters its proteolytic cleavage preference. Up-regulates as well MHC II complexes on the cell surface by promoting expression of several key molecules such as cathepsins B/CTSB, H/CTSH, and L/CTSL. Participates in the regulation of hematopoietic stem cells during development and under homeostatic conditions by affecting their development, quiescence, and differentiation. This Sigmodon hispidus (Hispid cotton rat) protein is Interferon gamma (IFNG).